The sequence spans 246 residues: Probable septum site-determining protein MinC (246 aa).

The protein belongs to the MinC family. Interacts with MinD and FtsZ.

Functionally, cell division inhibitor that blocks the formation of polar Z ring septums. Rapidly oscillates between the poles of the cell to destabilize FtsZ filaments that have formed before they mature into polar Z rings. Prevents FtsZ polymerization. The sequence is that of Probable septum site-determining protein MinC from Pseudomonas savastanoi pv. phaseolicola (strain 1448A / Race 6) (Pseudomonas syringae pv. phaseolicola (strain 1448A / Race 6)).